We begin with the raw amino-acid sequence, 324 residues long: MATH domain and coiled-coil domain-containing protein At3g44790 (324 aa).

The region spanning 3–125 (YEKFTWVIKN…NNEVKIVVEV (123 aa)) is the MATH domain. Residues 241–309 (FKVDWLERKL…ALLEKEKAKS (69 aa)) adopt a coiled-coil conformation.

This Arabidopsis thaliana (Mouse-ear cress) protein is MATH domain and coiled-coil domain-containing protein At3g44790.